The primary structure comprises 82 residues: Putative membrane protein insertion efficiency factor (82 aa).

It belongs to the UPF0161 family.

It localises to the cell membrane. Functionally, could be involved in insertion of integral membrane proteins into the membrane. The sequence is that of Putative membrane protein insertion efficiency factor from Streptococcus thermophilus (strain ATCC BAA-491 / LMD-9).